The sequence spans 353 residues: Farnesyl pyrophosphate synthase (353 aa).

Residues lysine 57, arginine 60, and glutamine 96 each coordinate isopentenyl diphosphate. Lysine 57 carries the post-translational modification N6-(2-hydroxyisobutyryl)lysine; alternate. The residue at position 57 (lysine 57) is an N6-acetyllysine; alternate. Mg(2+) contacts are provided by aspartate 103 and aspartate 107. Arginine 112 contributes to the dimethylallyl diphosphate binding site. An isopentenyl diphosphate-binding site is contributed by arginine 113. Dimethylallyl diphosphate contacts are provided by lysine 200, threonine 201, glutamine 240, lysine 257, and lysine 266.

Belongs to the FPP/GGPP synthase family. As to quaternary structure, homodimer. Interacts with RSAD2. Interacts with bovine leukemia virus (BLV) protein G4. Mg(2+) is required as a cofactor.

The protein localises to the cytoplasm. The enzyme catalyses isopentenyl diphosphate + dimethylallyl diphosphate = (2E)-geranyl diphosphate + diphosphate. The catalysed reaction is isopentenyl diphosphate + (2E)-geranyl diphosphate = (2E,6E)-farnesyl diphosphate + diphosphate. It participates in isoprenoid biosynthesis; farnesyl diphosphate biosynthesis; farnesyl diphosphate from geranyl diphosphate and isopentenyl diphosphate: step 1/1. Its pathway is isoprenoid biosynthesis; geranyl diphosphate biosynthesis; geranyl diphosphate from dimethylallyl diphosphate and isopentenyl diphosphate: step 1/1. Inactivated by interferon-induced RSAD2. This inactivation may result of disruption of lipid rafts at the plasma membrane, and thus have an antiviral effect since many enveloped viruses need lipid rafts to bud efficiently out of the cell. Functionally, key enzyme in isoprenoid biosynthesis which catalyzes the formation of farnesyl diphosphate (FPP), a precursor for several classes of essential metabolites including sterols, dolichols, carotenoids, and ubiquinones. FPP also serves as substrate for protein farnesylation and geranylgeranylation. Catalyzes the sequential condensation of isopentenyl pyrophosphate with the allylic pyrophosphates, dimethylallyl pyrophosphate, and then with the resultant geranylpyrophosphate to the ultimate product farnesyl pyrophosphate. In Bos taurus (Bovine), this protein is Farnesyl pyrophosphate synthase (FDPS).